A 110-amino-acid polypeptide reads, in one-letter code: UPF0367 protein Syncc9605_2376 (110 aa).

This sequence belongs to the UPF0367 family.

The sequence is that of UPF0367 protein Syncc9605_2376 from Synechococcus sp. (strain CC9605).